The following is a 257-amino-acid chain: 5-oxoprolinase subunit A (257 aa).

The protein belongs to the LamB/PxpA family. In terms of assembly, forms a complex composed of PxpA, PxpB and PxpC.

It catalyses the reaction 5-oxo-L-proline + ATP + 2 H2O = L-glutamate + ADP + phosphate + H(+). Catalyzes the cleavage of 5-oxoproline to form L-glutamate coupled to the hydrolysis of ATP to ADP and inorganic phosphate. The chain is 5-oxoprolinase subunit A from Oceanobacillus iheyensis (strain DSM 14371 / CIP 107618 / JCM 11309 / KCTC 3954 / HTE831).